A 256-amino-acid chain; its full sequence is DNA repair protein RecO (256 aa).

This sequence belongs to the RecO family.

Functionally, involved in DNA repair and RecF pathway recombination. This is DNA repair protein RecO from Rhizobium johnstonii (strain DSM 114642 / LMG 32736 / 3841) (Rhizobium leguminosarum bv. viciae).